We begin with the raw amino-acid sequence, 669 residues long: Myb-like protein M (669 aa).

Positions 27-69 (DPSLMDDEFSDNEYDLSPKDDVPSPSKRGRGQIQNGIRRSPNK) are disordered. Residues 30–40 (LMDDEFSDNEY) are compositionally biased toward acidic residues. HTH myb-type domains are found at residues 60 to 118 (QNGI…SPDI) and 119 to 170 (RKGP…SREV). 2 DNA-binding regions (H-T-H motif) span residues 90–114 (WKRI…KRVL) and 142–166 (WKKI…KSLQ). Residues 172–223 (WVPKEDEVLVKKVDEMGENLSWLEVSEYLAKLKHTNTLRTALECKTRYLQLT) form the Myb-like domain. 2 disordered regions span residues 226–530 (GGSI…EDNG) and 550–636 (IKNK…PHQS). 3 stretches are compositionally biased toward low complexity: residues 234–382 (NQSN…SSPS), 389–415 (NNNN…NSNN), and 450–464 (PTSL…SSPS). The span at 465 to 482 (CNNSIRQPSPSPSIKTFK) shows a compositional bias: polar residues. Low complexity-rich tracts occupy residues 483-521 (STIV…NNDN), 555-593 (NNNN…NSDN), and 611-636 (SNFK…PHQS).

The protein resides in the nucleus. In Dictyostelium discoideum (Social amoeba), this protein is Myb-like protein M (mybM).